The following is a 414-amino-acid chain: Arrestin domain-containing protein 3 (414 aa).

Short sequence motifs (PPxY motif) lie at residues 346 to 349 and 391 to 394; these read PPSY and PPLY. Residues 393-414 form a disordered region; sequence LYSEIDPNPDQPADDRPSCPSR. Over residues 405-414 the composition is skewed to basic and acidic residues; that stretch reads ADDRPSCPSR.

This sequence belongs to the arrestin family. In terms of assembly, interacts (via PPxY motifs) with NEDD4 (via WW domains). Interacts with ADRB2. Interacts with ADRB3. Interacts with HGS (via PPxY motifs). Does not bind TXN (thioredoxin). Interacts with ITCH.

Its subcellular location is the cytoplasm. It is found in the cell membrane. The protein localises to the lysosome. It localises to the endosome. The protein resides in the early endosome. Adapter protein that plays a role in regulating cell-surface expression of adrenergic receptors and probably also other G protein-coupled receptors. Plays a role in NEDD4-mediated ubiquitination and endocytosis af activated ADRB2 and subsequent ADRB2 degradation. May recruit NEDD4 to ADRB2. Alternatively, may function as adapter protein that does not play a major role in recruiting NEDD4 to ADRB2, but rather plays a role in a targeting ADRB2 to endosomes. The sequence is that of Arrestin domain-containing protein 3 (ARRDC3) from Bos taurus (Bovine).